Consider the following 330-residue polypeptide: MGNCLYPVADDNSTKLAIKEDFLIDFPEDYYPDYNETDVEAAAPCHSCSLLNYSSLPFFILVSILGILASGTILYALLRPLFRWQLYQDRSTLVQLAVGSALFSIVVPILARGLSGALITSLCHLAHLVAYGSAFAQALLIGYHACLGPQLGAGQVPGLRLGVTVGLWGVAALLSLPVVLGSDTSQGLCTVTFSGEWETLRYIHAAACFAIFVLLPLGLLGTKGLKTVLGRAPCPWVDVLWVWFIFWWPQGMTLGLDSLVRSKAIVVSTCPAQQALDMLLDVAEALAILHCVATPLLLAWVCYQATHTSPPSLPLPTTQTSHLDTLGGKS.

The Extracellular portion of the chain corresponds to M1–P57. N-linked (GlcNAc...) asparagine glycans are attached at residues N12, N35, and N52. Intrachain disulfides connect C45–C270 and C123–C189. The chain crosses the membrane as a helical span at residues F58–L78. At R79 to D89 the chain is on the cytoplasmic side. The helical transmembrane segment at R90 to L110 threads the bilayer. At A111–C123 the chain is on the extracellular side. A helical membrane pass occupies residues H124–L147. Topologically, residues G148–R160 are cytoplasmic. A helical membrane pass occupies residues L161–G181. Residues S182–R201 lie on the Extracellular side of the membrane. A helical membrane pass occupies residues Y202 to T222. At K223–D238 the chain is on the cytoplasmic side. Residues V239–L259 traverse the membrane as a helical segment. Residues V260 to D281 lie on the Extracellular side of the membrane. The helical transmembrane segment at V282 to C302 threads the bilayer. Residues Y303 to S330 lie on the Cytoplasmic side of the membrane.

It belongs to the G-protein coupled receptor 1 family. Atypical chemokine receptor subfamily.

The protein localises to the early endosome. It localises to the recycling endosome. Its subcellular location is the membrane. In terms of biological role, atypical chemokine receptor that controls chemokine levels and localization via high-affinity chemokine binding that is uncoupled from classic ligand-driven signal transduction cascades, resulting instead in chemokine sequestration, degradation, or transcytosis. Also known as interceptor (internalizing receptor) or chemokine-scavenging receptor or chemokine decoy receptor. Has a promiscuous chemokine-binding profile, interacting with inflammatory chemokines of both the CXC and the CC subfamilies but not with homeostatic chemokines. Acts as a receptor for chemokines including CCL2, CCL5, CCL7, CCL11, CCL13, CCL14, CCL17, CXCL5, CXCL6, IL8/CXCL8, CXCL11, GRO, RANTES, MCP-1 and TARC. May regulate chemokine bioavailability and, consequently, leukocyte recruitment through two distinct mechanisms: when expressed in endothelial cells, it sustains the abluminal to luminal transcytosis of tissue-derived chemokines and their subsequent presentation to circulating leukocytes; when expressed in erythrocytes, serves as blood reservoir of cognate chemokines but also as a chemokine sink, buffering potential surges in plasma chemokine levels. The sequence is that of Atypical chemokine receptor 1 (ACKR1) from Bos taurus (Bovine).